The sequence spans 383 residues: Probable sphingolipid long chain base-responsive protein pil2 (383 aa).

Ser162 is modified (phosphoserine). 2 disordered regions span residues 292-336 and 356-383; these read PRTD…EDYQ and GEED…PIAA. Over residues 311–324 the composition is skewed to low complexity; sequence TTSGTTHSYTSTGS. 2 stretches are compositionally biased toward polar residues: residues 325-336 and 368-383; these read KRYSQMGTEDYQ and VAET…PIAA.

Phosphorylated by ksg1 and ppk21. Phosphorylation is regulated by sphingolipid long chain bases (LCBs).

In terms of biological role, negative regulator of cell wall integrity (CWI) in unstressed cells, probably by inhibiting protein kinase ksg1/ppk21 activity and regulating their downstream CWI pathways pck2-MAP kinase pathway and protein kinase gad8 pathway. Activity may be regulated by the transient increase of sphingolipid long chain bases (LCBs) during heat stress. This is Probable sphingolipid long chain base-responsive protein pil2 (pil2) from Schizosaccharomyces pombe (strain 972 / ATCC 24843) (Fission yeast).